We begin with the raw amino-acid sequence, 346 residues long: Peroxidase 38 (346 aa).

An N-terminal signal peptide occupies residues 1-22; sequence MHSSLIKLGFLLLLLQVSLSHA. Q23 carries the post-translational modification Pyrrolidone carboxylic acid. Cystine bridges form between C33/C113, C66/C71, C119/C323, and C199/C231. The Proton acceptor role is filled by H64. Ca(2+) is bound by residues D65, V68, G70, D72, and S74. N79 is a glycosylation site (N-linked (GlcNAc...) asparagine). P161 lines the substrate pocket. Residue H192 coordinates heme b. A Ca(2+)-binding site is contributed by T193. An N-linked (GlcNAc...) asparagine glycan is attached at N236. Ca(2+) is bound by residues D244, T247, and D252.

Belongs to the peroxidase family. Classical plant (class III) peroxidase subfamily. Requires heme b as cofactor. It depends on Ca(2+) as a cofactor.

The protein resides in the secreted. The protein localises to the vacuole. The catalysed reaction is 2 a phenolic donor + H2O2 = 2 a phenolic radical donor + 2 H2O. Removal of H(2)O(2), oxidation of toxic reductants, biosynthesis and degradation of lignin, suberization, auxin catabolism, response to environmental stresses such as wounding, pathogen attack and oxidative stress. These functions might be dependent on each isozyme/isoform in each plant tissue. The protein is Peroxidase 38 (PER38) of Arabidopsis thaliana (Mouse-ear cress).